We begin with the raw amino-acid sequence, 546 residues long: Chaperonin GroEL (546 aa).

ATP is bound by residues 30–33 (TLGP), K51, 87–91 (DGTTT), G415, and D495.

Belongs to the chaperonin (HSP60) family. Forms a cylinder of 14 subunits composed of two heptameric rings stacked back-to-back. Interacts with the co-chaperonin GroES.

The protein localises to the cytoplasm. It carries out the reaction ATP + H2O + a folded polypeptide = ADP + phosphate + an unfolded polypeptide.. In terms of biological role, together with its co-chaperonin GroES, plays an essential role in assisting protein folding. The GroEL-GroES system forms a nano-cage that allows encapsulation of the non-native substrate proteins and provides a physical environment optimized to promote and accelerate protein folding. The protein is Chaperonin GroEL of Brucella suis (strain ATCC 23445 / NCTC 10510).